The chain runs to 301 residues: Golgi to ER traffic protein 2 (301 aa).

The Cytoplasmic portion of the chain corresponds to 1–167 (MSEPVVDTAE…LEYNTYNQKL (167 aa)). Residues 42–55 (SQGSSVKTSGVKSV) show a composition bias toward low complexity. Residues 42–93 (SQGSSVKTSGVKSVLDQEKEATSSHDDDPEIQDITEITTPPPRTPPIGEDAP) form a disordered region. Residues 56-67 (LDQEKEATSSHD) show a composition bias toward basic and acidic residues. Residues 168–188 (WKFRFLLVRVLVTLFNFFYHY) form a helical membrane-spanning segment. The Lumenal portion of the chain corresponds to 189–214 (TSISDFHASNYAYVRDLSSEEYPVRD). A helical transmembrane segment spans residues 215 to 234 (FFTWFATSEVVLVAAYYSVF). Over 235 to 278 (HSLGLFHAANQNSIILKVMSMGSMILPQLESYKPLVARFLGYYE) the chain is Cytoplasmic. Residues 279–299 (LLGIVLGGLSLVIVLFGLLSF) traverse the membrane as a helical segment. Over 300–301 (AN) the chain is Lumenal.

Belongs to the GET2 family. As to quaternary structure, component of the Golgi to ER traffic (GET) complex, which is composed of GET1, GET2 and GET3. Within the complex, GET1 and GET2 form a heterotetramer which is stabilized by phosphatidylinositol binding and which binds to the GET3 homodimer.

It localises to the endoplasmic reticulum membrane. The protein resides in the golgi apparatus membrane. In terms of biological role, required for the post-translational delivery of tail-anchored (TA) proteins to the endoplasmic reticulum. Together with GET1, acts as a membrane receptor for soluble GET3, which recognizes and selectively binds the transmembrane domain of TA proteins in the cytosol. The GET complex cooperates with the HDEL receptor ERD2 to mediate the ATP-dependent retrieval of resident ER proteins that contain a C-terminal H-D-E-L retention signal from the Golgi to the ER. The polypeptide is Golgi to ER traffic protein 2 (Candida dubliniensis (strain CD36 / ATCC MYA-646 / CBS 7987 / NCPF 3949 / NRRL Y-17841) (Yeast)).